Here is a 276-residue protein sequence, read N- to C-terminus: uncharacterized protein (276 aa).

An AB hydrolase-1 domain is found at 20–137 (PVLIFIPGAN…PPINTFLPDS (118 aa)). The interval 57–76 (GESELTEPLPDSASNPDSDY) is disordered.

It belongs to the AB hydrolase superfamily.

This is an uncharacterized protein from Staphylococcus aureus (strain N315).